Here is a 395-residue protein sequence, read N- to C-terminus: Elongation factor Tu (395 aa).

One can recognise a tr-type G domain in the interval 10-204; it reads KPHVNIGTIG…AVDSYIPTPE (195 aa). The interval 19-26 is G1; sequence GHVDHGKT. 19–26 contacts GTP; it reads GHVDHGKT. Threonine 26 serves as a coordination point for Mg(2+). Residues 60-64 form a G2 region; it reads GITIS. Positions 81-84 are G3; it reads DCPG. Residues 81–85 and 136–139 contribute to the GTP site; these read DCPGH and NKCD. The segment at 136-139 is G4; the sequence is NKCD. Residues 174-176 are G5; sequence SAL.

It belongs to the TRAFAC class translation factor GTPase superfamily. Classic translation factor GTPase family. EF-Tu/EF-1A subfamily. As to quaternary structure, monomer.

It is found in the cytoplasm. It carries out the reaction GTP + H2O = GDP + phosphate + H(+). In terms of biological role, GTP hydrolase that promotes the GTP-dependent binding of aminoacyl-tRNA to the A-site of ribosomes during protein biosynthesis. The polypeptide is Elongation factor Tu (Listeria monocytogenes serotype 4b (strain CLIP80459)).